The following is a 208-amino-acid chain: Pyrrolidone-carboxylate peptidase (208 aa).

Residues Glu79, Cys142, and His166 contribute to the active site.

It belongs to the peptidase C15 family. In terms of assembly, homotetramer made of two disulfide-linked dimers.

The protein localises to the cytoplasm. The catalysed reaction is Release of an N-terminal pyroglutamyl group from a polypeptide, the second amino acid generally not being Pro.. Its function is as follows. Removes 5-oxoproline from various penultimate amino acid residues except L-proline. The protein is Pyrrolidone-carboxylate peptidase (pcp) of Pyrococcus furiosus (strain ATCC 43587 / DSM 3638 / JCM 8422 / Vc1).